The sequence spans 604 residues: Lipoma-preferred partner homolog (604 aa).

2 disordered regions span residues 31-96 (TPSI…LDDV) and 129-381 (DLES…AFRP). A compositionally biased stretch (polar residues) spans 32-41 (PSISVSTQQT). Low complexity-rich tracts occupy residues 42 to 53 (PKKFAPVVAPKP) and 143 to 161 (GSGTSSSAATTPSVSTPVT). The span at 207-226 (SYTTASTPSRPTFNVQVRTA) shows a compositional bias: polar residues. A compositionally biased stretch (low complexity) spans 365–377 (SGYPSSGPTSSTP). 3 LIM zinc-binding domains span residues 406 to 465 (GRCA…INTL), 466 to 526 (EQCS…KFAP), and 527 to 595 (RCSV…RIQA).

It belongs to the zyxin/ajuba family.

The protein resides in the nucleus. It is found in the cytoplasm. The protein localises to the cell junction. In terms of biological role, may play a structural role at sites of cell adhesion in maintaining cell shape and motility. May be involved in signal transduction from cell adhesion sites to the nucleus. The sequence is that of Lipoma-preferred partner homolog (LPP) from Gallus gallus (Chicken).